A 163-amino-acid chain; its full sequence is Nucleotide-binding protein CJJ81176_0398 (163 aa).

The protein belongs to the YajQ family.

Functionally, nucleotide-binding protein. The sequence is that of Nucleotide-binding protein CJJ81176_0398 from Campylobacter jejuni subsp. jejuni serotype O:23/36 (strain 81-176).